An 88-amino-acid chain; its full sequence is Large ribosomal subunit protein bL31B (88 aa).

It belongs to the bacterial ribosomal protein bL31 family. Type B subfamily. In terms of assembly, part of the 50S ribosomal subunit.

This is Large ribosomal subunit protein bL31B from Nocardia farcinica (strain IFM 10152).